Reading from the N-terminus, the 189-residue chain is Guanylate kinase (189 aa).

One can recognise a Guanylate kinase-like domain in the interval 8-186 (GKLTVITGPS…AVIELESLMG (179 aa)). Residue 15–22 (GPSGVGKG) participates in ATP binding.

The protein belongs to the guanylate kinase family.

The protein resides in the cytoplasm. It catalyses the reaction GMP + ATP = GDP + ADP. Its function is as follows. Essential for recycling GMP and indirectly, cGMP. The protein is Guanylate kinase of Prochlorococcus marinus (strain MIT 9313).